The sequence spans 334 residues: D-alanine--D-alanine ligase (334 aa).

The 201-residue stretch at 114 to 314 (KRIWRFEGLP…YEELCLRILA (201 aa)) folds into the ATP-grasp domain. 140–195 (LEDLGSPMIVKPSREGSTIGLTKVTSPGQCEQAYRLASRYDPEVLCEQFIEGEETT) is an ATP binding site. Mg(2+) contacts are provided by Asp-267, Glu-281, and Asn-283.

Belongs to the D-alanine--D-alanine ligase family. It depends on Mg(2+) as a cofactor. Requires Mn(2+) as cofactor.

The protein resides in the cytoplasm. It carries out the reaction 2 D-alanine + ATP = D-alanyl-D-alanine + ADP + phosphate + H(+). It functions in the pathway cell wall biogenesis; peptidoglycan biosynthesis. Its function is as follows. Cell wall formation. In Paracidovorax citrulli (strain AAC00-1) (Acidovorax citrulli), this protein is D-alanine--D-alanine ligase.